Reading from the N-terminus, the 549-residue chain is FERM domain-containing protein 1 (549 aa).

A disordered region spans residues 1 to 40 (MAVPPRGRGIDPARTNPDTFPPSGARCMEPSPERPACSQQ). The FERM domain maps to 54–369 (RDVLVLLPSR…DELELDLASR (316 aa)). Disordered regions lie at residues 377 to 400 (SSQHCPHCLSRHSADSHGSSYTSG) and 422 to 464 (HGLH…GQSA). Residues 430 to 443 (SSSPRTSRSHPSTR) show a composition bias toward low complexity. The span at 444–462 (GDSQATRQEPCTQVRTRGQ) shows a compositional bias: polar residues.

The chain is FERM domain-containing protein 1 (FRMD1) from Homo sapiens (Human).